The primary structure comprises 479 residues: Endo-beta-1,6-galactanase (479 aa).

A signal peptide spans 1–20 (MRSIVLPSLALALFSQRARA). An N-linked (GlcNAc...) asparagine glycan is attached at N89. The active-site Proton donor is E210. N-linked (GlcNAc...) asparagine glycosylation is present at N271. E311 functions as the Nucleophile in the catalytic mechanism. N358 carries N-linked (GlcNAc...) asparagine glycosylation.

It catalyses the reaction Endohydrolysis of (1-&gt;6)-beta-D-galactosidic linkages in arabinogalactan proteins and (1-&gt;3):(1-&gt;6)-beta-galactans to yield galactose and beta-(1-&gt;6)-galactaobiose as the final products.. In terms of biological role, hydrolyzes galactooligomers with a degree of polymerization higher than 3. Hydrolyzes radish root arabinogalactan-protein. Does not hydrolyze dextran, arabinan, starch, laminarin, beta-1,4- and beta-1,3-galactans, larch wood arabinogalactan or acid-insoluble polygalacturonic acid. The protein is Endo-beta-1,6-galactanase of Hypocrea rufa (Trichoderma viride).